Here is a 108-residue protein sequence, read N- to C-terminus: Type III secretion system chaperone SseA (108 aa).

A coiled-coil region spans residues 69-97 (NQEAEKDLKKIVSLFKQLEVRLKQLNAQA).

In terms of assembly, binds to SseB and SseD.

It is found in the cytoplasm. Its function is as follows. Functions as a type III secretion system (T3SS) chaperone, which is required for SseB and SseD accumulation and secretion. May have a direct role in secretion of SseB and SseD, or may facilitate their correct folding, for efficient secretion and function. Required for survival and replication within epithelial cells and macrophages. The sequence is that of Type III secretion system chaperone SseA (sseA) from Salmonella typhimurium (strain LT2 / SGSC1412 / ATCC 700720).